Here is a 383-residue protein sequence, read N- to C-terminus: Fatty acid hydroxylase ahd1 (383 aa).

Transmembrane regions (helical) follow at residues 84–104, 123–143, 172–192, and 214–236; these read VMGL…NKSW, TVHT…LFAL, LIPV…IIYY, and VAQW…RALH. A Fatty acid hydroxylase domain is found at 217–341; it reads WLVCLLMEDI…VGLLDAIFKT (125 aa). The N-linked (GlcNAc...) asparagine glycan is linked to N342.

The protein belongs to the sterol desaturase family.

It is found in the membrane. It participates in secondary metabolite biosynthesis. Functionally, fatty acid hydroxylase; part of the gene cluster that mediates the biosynthesis of the glycolipid biosurfactant ustilagic acid (UA). UA is a secreted cellobiose glycolipid that is toxic for many microorganisms and confers biocontrol activity to U.maydis. UA consists of 15,16-dihydroxypalmitic or 2,15,16-trihydroxypalmitic acid, which is O-glycosidically linked to cellobiose at its terminal hydroxyl group. In addition, the cellobiose moiety is acetylated and acylated with a short-chain hydroxy fatty acid. UA biosynthesis starts with omega-hydroxylation of palmitic acid catalyzed by the cytochrome P450 monooxygenase cyp1. Terminal hydroxylation of palmitic acid precedes subterminal hydroxylation catalyzed by the cytochrome P450 monooxygenase cyp2. Sequential glucosylation of the hydroxy fatty acid is probably catalyzed by the glycosyltransferase ugt1. The cellobiose lipid is further decorated by acetylation of the proximal glucose residue and by acylation with a short-chain beta-hydroxy fatty acid at the distal glucose residue. The acyltransferase uat1 may be a good candidate for catalyzing either acetylation or acylation of the cellobiose lipid. The fatty acid synthase fas2 may be involved in synthesis of the carbon backbone of the short-chain beta-hydroxy fatty acid esterified to the cellobiose disaccharide. The secreted UA consists of a mixture of both alpha-hydroxylated and non-hydroxylated glycolipids; therefore, alpha-hydroxylation of the long-chain fatty, catalyzed by the fatty acid hydroxylase ahd1, occurs late in UA biosynthesis and may be the last step before secretion. The chain is Fatty acid hydroxylase ahd1 from Mycosarcoma maydis (Corn smut fungus).